The chain runs to 515 residues: Rop guanine nucleotide exchange factor 12 (515 aa).

The PRONE domain occupies 83–446 (QARERQLLAD…RAGNKRNTPL (364 aa)). A Phosphoserine modification is found at Ser-510.

In terms of assembly, interacts (via C-terminus) with PRK2. Interacts with PRK6. As to expression, expressed in pollen grains.

It is found in the cytoplasm. The protein localises to the cell membrane. Its activity is regulated as follows. Phosphorylation at Ser-510 by PRK2 may release ROPGEF12 auto-inhibition, thereby activating ROPGEF12 and downstream Rop signaling. In terms of biological role, guanine-nucleotide exchange factor (GEF) that acts as an activator of Rop (Rho of plants) GTPases by promoting the exchange of GDP for GTP. May be recruited by PRK2 at the plasma membrane to maintain polar Rop activity in the pollen tube and control polarized pollen tube growth. The chain is Rop guanine nucleotide exchange factor 12 from Arabidopsis thaliana (Mouse-ear cress).